The primary structure comprises 46 residues: Replication-associated protein (46 aa).

Functionally, seems to play a role in virus replication. The sequence is that of Replication-associated protein from Solanum tuberosum (Potato).